A 101-amino-acid polypeptide reads, in one-letter code: Conopressin/conophysin, isoform 3 (101 aa).

A signal peptide is located at residue A1. C2 and C7 are disulfide-bonded. G10 is subject to Glycine amide. Residues 11–18 (GKRNVDEG) constitute a propeptide that is removed on maturation. 7 disulfide bridges follow: C23-C63, C26-C37, C31-C53, C38-C43, C70-C88, C82-C100, and C89-C94.

It belongs to the vasopressin/oxytocin family. In terms of tissue distribution, expressed by the venom gland.

It localises to the secreted. In terms of biological role, targets vasopressin-oxytocin related receptors. Is more active on fish receptors than on their human counterparts, supporting an evolved role of this conopressin in the envenomation process. Acts as an agonist on zebrafish vasopressin receptors V1a1R (EC(50)=10.6 nM), V1a2R (EC(50)=44.06 nM, partial agonist), V2R (EC(50)=299.2 nM) and oxytocin receptor (EC(50)=353.73 nM, partial agonist). Shows a weaker activity on human receptors AVPR1B (EC(50)=51.92 nM), AVPR1A (EC(50)=123.78 nM), AVPR2 (EC(50)=299.2 nM) and oxytocin (OXTR) receptor (EC(50)=455.66 nM, partial agonist). In vivo, exhibits grooming and scratching behavior in mice, following intracerebral injection. The protein is Conopressin/conophysin, isoform 3 of Conus monile (Necklace cone).